We begin with the raw amino-acid sequence, 245 residues long: MVLNSDLTTQDKERIINPIERPTVTQDLSENVILTTVDDLYNWARLSSLWPLLFGTACCFIEFAALIGSRFDFDRFGLIPRSSPRQADLIITAGTITMKMAPQLVRLYEQMPEPKYVIAMGACTITGGMFSVDSPTAVRGVDKLIPVDVYLPGCPPRPEAIIDAIIKLRKKIANDSMQERSLIRQTHRFYSTTHNLKPVAEILTGKYMQSETRFNPPKELTEAIGLPVPPALLTSQTQKEEQKRG.

[4Fe-4S] cluster is bound by residues cysteine 58, cysteine 59, cysteine 123, and cysteine 154.

It belongs to the complex I 20 kDa subunit family. NDH-1 can be composed of about 15 different subunits; different subcomplexes with different compositions have been identified which probably have different functions. [4Fe-4S] cluster serves as cofactor.

It is found in the cellular thylakoid membrane. The enzyme catalyses a plastoquinone + NADH + (n+1) H(+)(in) = a plastoquinol + NAD(+) + n H(+)(out). It catalyses the reaction a plastoquinone + NADPH + (n+1) H(+)(in) = a plastoquinol + NADP(+) + n H(+)(out). Functionally, NDH-1 shuttles electrons from an unknown electron donor, via FMN and iron-sulfur (Fe-S) centers, to quinones in the respiratory and/or the photosynthetic chain. The immediate electron acceptor for the enzyme in this species is believed to be plastoquinone. Couples the redox reaction to proton translocation, and thus conserves the redox energy in a proton gradient. Cyanobacterial NDH-1 also plays a role in inorganic carbon-concentration. This Trichormus variabilis (strain ATCC 29413 / PCC 7937) (Anabaena variabilis) protein is NAD(P)H-quinone oxidoreductase subunit K.